The sequence spans 207 residues: N-(5'-phosphoribosyl)anthranilate isomerase (207 aa).

This sequence belongs to the TrpF family.

It carries out the reaction N-(5-phospho-beta-D-ribosyl)anthranilate = 1-(2-carboxyphenylamino)-1-deoxy-D-ribulose 5-phosphate. Its pathway is amino-acid biosynthesis; L-tryptophan biosynthesis; L-tryptophan from chorismate: step 3/5. The polypeptide is N-(5'-phosphoribosyl)anthranilate isomerase (Petrotoga mobilis (strain DSM 10674 / SJ95)).